A 463-amino-acid chain; its full sequence is MDITLVKSLYREAEKYMDKEVKINGWVRTVRDSKNFAFVEVNDGSFFKNVQVILESSLENFKELCKMPISTSVEVEGIIQPTPNAKQPFEIKATRVSIEGKSSTDYPLQKKRHTFEYLRTIAHLRPRSNAFSAVFRVRSLAAYAVHKFFQERGFVYTNTPIITGSDCEGAGEMFQLTTMDLNNIPKTEEGKIDFSKDFFGSPANLTVSGQLSAETFALAFRNVYTFGPTFRAENSNTARHASEFWMIEPEMAFAELTDYLDNAENMVKFVINYVMENAPEEMAFFNSFVDKGLFDRLDNVVNSDFKRITYTEAVELLQKSGGKFDYEVEWGIDLQTEHERYLTEQIFKKPVFVTDYPKDIKAFYMRLNDDGKTVAAADLLVPGVGEIIGGSQREERLDVLEKRMEELNLNKEDYWWYLELRKYGETKHSGYGLGFERILMYITGMTNIRDVIPFPRTPGSAEF.

Belongs to the class-II aminoacyl-tRNA synthetase family. In terms of assembly, homodimer.

Its subcellular location is the cytoplasm. It catalyses the reaction tRNA(Asn) + L-asparagine + ATP = L-asparaginyl-tRNA(Asn) + AMP + diphosphate + H(+). This chain is Asparagine--tRNA ligase, found in Clostridium botulinum (strain Langeland / NCTC 10281 / Type F).